The primary structure comprises 380 residues: Opsin-2 (380 aa).

At 1–51 the chain is on the extracellular side; the sequence is MVNTTDFYPVPAAMAYESSVGLPLLGWNVPTEHLDLVHPHWRSFQVPNKYW. A glycan (N-linked (GlcNAc...) asparagine) is linked at Asn-3. Residues 52–76 form a helical membrane-spanning segment; it reads HFGLAFVYFMLMCMSSLGNGIVLWI. Over 77 to 88 the chain is Cytoplasmic; sequence YATTKSIRTPSN. The chain crosses the membrane as a helical span at residues 89 to 115; it reads MFIVNLALFDVLMLLEMPMLVVSSLFY. The Extracellular segment spans residues 116–128; it reads QRPVGWELGCDIY. An intrachain disulfide couples Cys-125 to Cys-202. A helical membrane pass occupies residues 129–148; the sequence is AALGSVAGIGSAINNAAIAF. At 149 to 166 the chain is on the cytoplasmic side; it reads DRYRTISCPIDGRLTQGQ. Residues 167–191 form a helical membrane-spanning segment; the sequence is VLALIAGTWVWTLPFTLMPLLRIWS. Residues 192–215 are Extracellular-facing; that stretch reads RFTAEGFLTTCSFDYLTDDEDTKV. A helical membrane pass occupies residues 216–243; it reads FVGCIFAWSYAFPLCLICCFYYRLIGAV. The Cytoplasmic portion of the chain corresponds to 244 to 279; it reads REHEKMLRDQAKKMNVKSLQSNADTEAQSAEIRIAK. The helical transmembrane segment at 280 to 303 threads the bilayer; the sequence is VALTIFFLFLCSWTPYAVVAMIGA. At 304-311 the chain is on the extracellular side; the sequence is FGNRAALT. A helical membrane pass occupies residues 312 to 336; it reads PLSTMIPAVTAKIVSCIDPWVYAIN. Lys-323 carries the post-translational modification N6-(retinylidene)lysine. Residues 337 to 380 lie on the Cytoplasmic side of the membrane; it reads HPRFRAEVQKRMKWLHLGEDARSSKSDTSSTATDRTVGNVSASA. The tract at residues 358 to 380 is disordered; that stretch reads RSSKSDTSSTATDRTVGNVSASA. Over residues 362-372 the composition is skewed to low complexity; sequence SDTSSTATDRT.

It belongs to the G-protein coupled receptor 1 family. Opsin subfamily. In terms of processing, phosphorylated on some or all of the serine and threonine residues present in the C-terminal region.

The protein resides in the membrane. Visual pigments are the light-absorbing molecules that mediate vision. They consist of an apoprotein, opsin, covalently linked to cis-retinal. The protein is Opsin-2 (Lo2) of Schistocerca gregaria (Desert locust).